A 511-amino-acid polypeptide reads, in one-letter code: GMP synthase [glutamine-hydrolyzing] (511 aa).

The Glutamine amidotransferase type-1 domain maps to 5 to 195 (DILVLDFGSQ…AKYACNCDSV (191 aa)). Cys82 functions as the Nucleophile in the catalytic mechanism. Residues His169 and Glu171 contribute to the active site. The GMPS ATP-PPase domain occupies 196 to 386 (WNMGSFAKTQ…LGLSKDVVYR (191 aa)). 223-229 (SGGVDSS) serves as a coordination point for ATP.

In terms of assembly, homodimer.

It carries out the reaction XMP + L-glutamine + ATP + H2O = GMP + L-glutamate + AMP + diphosphate + 2 H(+). It participates in purine metabolism; GMP biosynthesis; GMP from XMP (L-Gln route): step 1/1. Its function is as follows. Catalyzes the synthesis of GMP from XMP. This chain is GMP synthase [glutamine-hydrolyzing], found in Campylobacter lari (strain RM2100 / D67 / ATCC BAA-1060).